Reading from the N-terminus, the 520-residue chain is Glutamate--cysteine ligase (520 aa).

The protein belongs to the glutamate--cysteine ligase type 1 family. Type 1 subfamily.

It carries out the reaction L-cysteine + L-glutamate + ATP = gamma-L-glutamyl-L-cysteine + ADP + phosphate + H(+). The protein operates within sulfur metabolism; glutathione biosynthesis; glutathione from L-cysteine and L-glutamate: step 1/2. This Leptospira interrogans serogroup Icterohaemorrhagiae serovar Lai (strain 56601) protein is Glutamate--cysteine ligase.